We begin with the raw amino-acid sequence, 71 residues long: Transcription modulator YdgT (71 aa).

This sequence belongs to the Hha/YmoA/Cnu family. In terms of assembly, forms complexes with both H-NS and StpA.

Binds to H-NS and modified the range of genes it silences; H-NS alonge silences core gene while the H-NS-Hha complex (and presumably also H-NS-YdgT) silences genes acquired by horizontal gene transfer. Plays a role silencing virulence factors in the absence of factors that induce pathogenicity. The complex formed with H-NS binds to the specific 26-bp cnb site in the origin of replication oriC. The chain is Transcription modulator YdgT (ydgT) from Salmonella choleraesuis (strain SC-B67).